A 400-amino-acid chain; its full sequence is Mu-type opioid receptor (400 aa).

Residues 1-68 (MDSSAVPANA…CPPTGSPSMI (68 aa)) lie on the Extracellular side of the membrane. N-linked (GlcNAc...) asparagine glycosylation is found at Asn9, Asn12, Asn33, Asn40, and Asn48. Residues 69–93 (TAITIMALYSIVCVVGLFGNFLVMY) form a helical membrane-spanning segment. The Cytoplasmic portion of the chain corresponds to 94–106 (VIVRYTKMKTATN). A helical transmembrane segment spans residues 107-131 (IYIFNLALADALATSTLPFQSVNYL). The Extracellular segment spans residues 132–142 (MGTWPFGTILC). Cysteines 142 and 219 form a disulfide. A helical transmembrane segment spans residues 143–165 (KIVISIDYYNMFTSIFTLCTMSV). Residues 166-185 (DRYIAVCHPVKALDFRTPRN) are Cytoplasmic-facing. Tyr168 is modified (phosphotyrosine). The chain crosses the membrane as a helical span at residues 186–207 (AKIVNVCNWIISSAIGLPVMFM). At 208–230 (ATTKYRQGSIDCTLTFSHPTWYW) the chain is on the extracellular side. Residues 231–255 (ENLLKICVFIFAFIMPVLIITVCYG) traverse the membrane as a helical segment. The Cytoplasmic portion of the chain corresponds to 256–279 (LMILRLKSVRMLSGSKEKDRNLRR). Residues 280–306 (ITRMVLVVVAVFIVCWTPIHIYVIIKA) traverse the membrane as a helical segment. The Extracellular segment spans residues 307 to 314 (LVTIPETT). The helical transmembrane segment at 315-338 (FQTVSWHFCIALGYTNSCLNPVLY) threads the bilayer. The short motif at 334-338 (NPVLY) is the NPxxY; plays a role in stabilizing the activated conformation of the receptor element. Residues 339 to 400 (AFLDENFKRC…NLEAETAPLP (62 aa)) are Cytoplasmic-facing. Cys353 is lipidated: S-palmitoyl cysteine. A Phosphoserine modification is found at Ser365. The residue at position 372 (Thr372) is a Phosphothreonine. Phosphoserine is present on Ser377. Thr396 is subject to Phosphothreonine.

It belongs to the G-protein coupled receptor 1 family. As to quaternary structure, forms homooligomers and heterooligomers with other GPCRs, such as OPRD1, OPRK1, OPRL1, NPFFR2, ADRA2A, SSTR2, CNR1 and CCR5 (probably in dimeric forms). Interacts with heterotrimeric G proteins; interaction with a heterotrimeric complex containing GNAI1, GNB1 and GNG2 stabilizes the active conformation of the receptor and increases its affinity for endomorphin-2, the synthetic opioid peptide DAMGO and for morphinan agonists. Interacts with PPL; the interaction disrupts agonist-mediated G-protein activation. Interacts (via C-terminus) with DNAJB4 (via C-terminus). Interacts with calmodulin; the interaction inhibits the constitutive activity of OPRM1; it abolishes basal and attenuates agonist-stimulated G-protein coupling. Interacts with FLNA, PLD2, RANBP9 and WLS and GPM6A. Interacts with RTP4. Interacts with SYP and GNAS. Interacts with RGS9, RGS17, RGS20, RGS4, PPP1R9B and HINT1. Post-translationally, phosphorylated. Differentially phosphorylated in basal and agonist-induced conditions. Agonist-mediated phosphorylation modulates receptor internalization. Phosphorylated by GRK2 in a agonist-dependent manner. Phosphorylation at Tyr-168 requires receptor activation, is dependent on non-receptor protein tyrosine kinase Src and results in a decrease in agonist efficacy by reducing G-protein coupling efficiency. Phosphorylated on tyrosine residues; the phosphorylation is involved in agonist-induced G-protein-independent receptor down-regulation. Phosphorylation at Ser-377 is involved in G-protein-dependent but not beta-arrestin-dependent activation of the ERK pathway. In terms of processing, ubiquitinated. A basal ubiquitination seems not to be related to degradation. Ubiquitination is increased upon formation of OPRM1:OPRD1 oligomers leading to proteasomal degradation; the ubiquitination is diminished by RTP4.

It localises to the cell membrane. The protein localises to the cell projection. Its subcellular location is the axon. It is found in the perikaryon. The protein resides in the dendrite. It localises to the endosome. Receptor for endogenous opioids such as beta-endorphin and endomorphin. Receptor for natural and synthetic opioids including morphine, heroin, DAMGO, fentanyl, etorphine, buprenorphin and methadone. Also activated by enkephalin peptides, such as Met-enkephalin or Met-enkephalin-Arg-Phe, with higher affinity for Met-enkephalin-Arg-Phe. Agonist binding to the receptor induces coupling to an inactive GDP-bound heterotrimeric G-protein complex and subsequent exchange of GDP for GTP in the G-protein alpha subunit leading to dissociation of the G-protein complex with the free GTP-bound G-protein alpha and the G-protein beta-gamma dimer activating downstream cellular effectors. The agonist- and cell type-specific activity is predominantly coupled to pertussis toxin-sensitive G(i) and G(o) G alpha proteins, GNAI1, GNAI2, GNAI3 and GNAO1, and to a lesser extent to pertussis toxin-insensitive G alpha proteins GNAZ and GNA15. They mediate an array of downstream cellular responses, including inhibition of adenylate cyclase activity and both N-type and L-type calcium channels, activation of inward rectifying potassium channels, mitogen-activated protein kinase (MAPK), phospholipase C (PLC), phosphoinositide/protein kinase (PKC), phosphoinositide 3-kinase (PI3K) and regulation of NF-kappa-B. Also couples to adenylate cyclase stimulatory G alpha proteins. The selective temporal coupling to G-proteins and subsequent signaling can be regulated by RGSZ proteins, such as RGS9, RGS17 and RGS4. Phosphorylation by members of the GPRK subfamily of Ser/Thr protein kinases and association with beta-arrestins is involved in short-term receptor desensitization. Beta-arrestins associate with the GPRK-phosphorylated receptor and uncouple it from the G-protein thus terminating signal transduction. The phosphorylated receptor is internalized through endocytosis via clathrin-coated pits which involves beta-arrestins. The activation of the ERK pathway occurs either in a G-protein-dependent or a beta-arrestin-dependent manner and is regulated by agonist-specific receptor phosphorylation. Acts as a class A G-protein coupled receptor (GPCR) which dissociates from beta-arrestin at or near the plasma membrane and undergoes rapid recycling. Receptor down-regulation pathways are varying with the agonist and occur dependent or independent of G-protein coupling. Endogenous ligands induce rapid desensitization, endocytosis and recycling. Heterooligomerization with other GPCRs can modulate agonist binding, signaling and trafficking properties. Involved in neurogenesis. In Saimiri boliviensis boliviensis (Bolivian squirrel monkey), this protein is Mu-type opioid receptor (OPRM1).